Here is a 265-residue protein sequence, read N- to C-terminus: Secreted RxLR effector protein 146 (265 aa).

A signal peptide spans 1–25 (MRYYTQVVAASLVATLAVVDSIVFA). Residues 32–50 (RFLRQDGATVTRGGKGEER) carry the RxLR-dEER motif. 2 N-linked (GlcNAc...) asparagine glycosylation sites follow: asparagine 71 and asparagine 148.

This sequence belongs to the RxLR effector family.

It localises to the secreted. It is found in the host nucleus. The protein localises to the host cytoplasm. Its function is as follows. Secreted effector that completely suppresses the host cell death induced by cell death-inducing proteins. The protein is Secreted RxLR effector protein 146 of Plasmopara viticola (Downy mildew of grapevine).